Here is a 352-residue protein sequence, read N- to C-terminus: Holliday junction branch migration complex subunit RuvB (352 aa).

A large ATPase domain (RuvB-L) region spans residues Met1–Tyr182. Residues Ile21, Arg22, Gly63, Lys66, Thr67, Thr68, Glu129–Phe131, Arg172, Tyr182, and Arg219 contribute to the ATP site. A Mg(2+)-binding site is contributed by Thr67. The tract at residues Glu183–Glu253 is small ATPAse domain (RuvB-S). The segment at Glu256 to Asp352 is head domain (RuvB-H). DNA contacts are provided by Arg292, Arg311, and Arg316.

This sequence belongs to the RuvB family. Homohexamer. Forms an RuvA(8)-RuvB(12)-Holliday junction (HJ) complex. HJ DNA is sandwiched between 2 RuvA tetramers; dsDNA enters through RuvA and exits via RuvB. An RuvB hexamer assembles on each DNA strand where it exits the tetramer. Each RuvB hexamer is contacted by two RuvA subunits (via domain III) on 2 adjacent RuvB subunits; this complex drives branch migration. In the full resolvosome a probable DNA-RuvA(4)-RuvB(12)-RuvC(2) complex forms which resolves the HJ.

The protein resides in the cytoplasm. It catalyses the reaction ATP + H2O = ADP + phosphate + H(+). Functionally, the RuvA-RuvB-RuvC complex processes Holliday junction (HJ) DNA during genetic recombination and DNA repair, while the RuvA-RuvB complex plays an important role in the rescue of blocked DNA replication forks via replication fork reversal (RFR). RuvA specifically binds to HJ cruciform DNA, conferring on it an open structure. The RuvB hexamer acts as an ATP-dependent pump, pulling dsDNA into and through the RuvAB complex. RuvB forms 2 homohexamers on either side of HJ DNA bound by 1 or 2 RuvA tetramers; 4 subunits per hexamer contact DNA at a time. Coordinated motions by a converter formed by DNA-disengaged RuvB subunits stimulates ATP hydrolysis and nucleotide exchange. Immobilization of the converter enables RuvB to convert the ATP-contained energy into a lever motion, pulling 2 nucleotides of DNA out of the RuvA tetramer per ATP hydrolyzed, thus driving DNA branch migration. The RuvB motors rotate together with the DNA substrate, which together with the progressing nucleotide cycle form the mechanistic basis for DNA recombination by continuous HJ branch migration. Branch migration allows RuvC to scan DNA until it finds its consensus sequence, where it cleaves and resolves cruciform DNA. The polypeptide is Holliday junction branch migration complex subunit RuvB (Chlorobium chlorochromatii (strain CaD3)).